Consider the following 294-residue polypeptide: tRNA dimethylallyltransferase (294 aa).

11–18 (GPTAVGKT) is a binding site for ATP. Residue 13–18 (TAVGKT) coordinates substrate. Residues 36–39 (DSQQ) are interaction with substrate tRNA.

Belongs to the IPP transferase family. Monomer. Mg(2+) is required as a cofactor.

It catalyses the reaction adenosine(37) in tRNA + dimethylallyl diphosphate = N(6)-dimethylallyladenosine(37) in tRNA + diphosphate. Functionally, catalyzes the transfer of a dimethylallyl group onto the adenine at position 37 in tRNAs that read codons beginning with uridine, leading to the formation of N6-(dimethylallyl)adenosine (i(6)A). In Lactococcus lactis subsp. cremoris (strain SK11), this protein is tRNA dimethylallyltransferase.